The sequence spans 115 residues: Galanin-like peptide (115 aa).

The signal sequence occupies residues 1 to 23; that stretch reads MAPSVPLVLLLVLLLSLAETPAS. Residues 86–115 constitute a propeptide that is removed on maturation; it reads NVMEAFAKPEIGDLDVLSKKIPKEEDVLKS.

Belongs to the galanin family. As to expression, hypothalamus and pituitary gland.

It is found in the secreted. Functionally, hypothalamic neuropeptide which binds to the G-protein-coupled galanin receptors (GALR1, GALR2 and GALR3). Involved in a large number of putative physiological functions in CNS homeostatic processes, including the regulation of gonadotropin-releasing hormone secretion. In terms of biological role, exhibits potent and dose-dependent vasoconstrictor and anti-edema activity in the cutaneous microvasculature, a physiologic effects which does not appear to be mediated via GALR1 or GALR2. Exhibits antimicrobial activity against Gram-negative bacterias, inducing bacterial membrane blebbing. The polypeptide is Galanin-like peptide (GALP) (Macaca nemestrina (Pig-tailed macaque)).